Reading from the N-terminus, the 490-residue chain is Aspartyl/glutamyl-tRNA(Asn/Gln) amidotransferase subunit B (490 aa).

This sequence belongs to the GatB/GatE family. GatB subfamily. As to quaternary structure, heterotrimer of A, B and C subunits.

It carries out the reaction L-glutamyl-tRNA(Gln) + L-glutamine + ATP + H2O = L-glutaminyl-tRNA(Gln) + L-glutamate + ADP + phosphate + H(+). The catalysed reaction is L-aspartyl-tRNA(Asn) + L-glutamine + ATP + H2O = L-asparaginyl-tRNA(Asn) + L-glutamate + ADP + phosphate + 2 H(+). Functionally, allows the formation of correctly charged Asn-tRNA(Asn) or Gln-tRNA(Gln) through the transamidation of misacylated Asp-tRNA(Asn) or Glu-tRNA(Gln) in organisms which lack either or both of asparaginyl-tRNA or glutaminyl-tRNA synthetases. The reaction takes place in the presence of glutamine and ATP through an activated phospho-Asp-tRNA(Asn) or phospho-Glu-tRNA(Gln). This is Aspartyl/glutamyl-tRNA(Asn/Gln) amidotransferase subunit B from Burkholderia pseudomallei (strain 1106a).